Reading from the N-terminus, the 360-residue chain is Catabolic L-serine/threonine dehydratase (360 aa).

Serine 2 carries the N-acetylserine modification. Lysine 37 is subject to N6-(pyridoxal phosphate)lysine.

This sequence belongs to the serine/threonine dehydratase family. Pyridoxal 5'-phosphate is required as a cofactor.

Its subcellular location is the mitochondrion. It catalyses the reaction L-serine = pyruvate + NH4(+). The catalysed reaction is L-threonine = 2-oxobutanoate + NH4(+). In Saccharomyces cerevisiae (strain ATCC 204508 / S288c) (Baker's yeast), this protein is Catabolic L-serine/threonine dehydratase (CHA1).